We begin with the raw amino-acid sequence, 37 residues long: Large ribosomal subunit protein bL36 (37 aa).

The protein belongs to the bacterial ribosomal protein bL36 family.

The polypeptide is Large ribosomal subunit protein bL36 (Geobacter sp. (strain M21)).